The sequence spans 186 residues: Protein C (186 aa).

Positions 1–15 (MSKTDWNASGLSRPS) are enriched in polar residues. Residues 1-44 (MSKTDWNASGLSRPSPSAHWPSRKLWQHGQKYQTTQDRSEPPAG) form a disordered region.

This sequence belongs to the morbillivirus protein C family. In terms of assembly, interacts with the phosphoprotein (via C-terminus); this interaction allows C to associate with the ribonucleocapsid.

The protein localises to the host nucleus. The protein resides in the host cytoplasmic vesicle. Ribonucleocapsid-associated protein that interacts with the phosphoprotein (P), thereby increasing replication accuracy and processivity of the polymerase complex. This Homo sapiens (Human) protein is Protein C (P/V/C).